The sequence spans 364 residues: Adenosine 3'-phospho 5'-phosphosulfate transporter 2 (364 aa).

The next 10 helical transmembrane spans lie at tryptophan 39–methionine 59, tryptophan 74–isoleucine 94, isoleucine 106–glycine 126, proline 131–isoleucine 151, glycine 157–alanine 177, serine 187–isoleucine 206, valine 231–leucine 251, threonine 257–threonine 277, valine 281–leucine 301, and phenylalanine 310–tyrosine 330.

This sequence belongs to the nucleotide-sugar transporter family. SLC35B subfamily.

It is found in the golgi apparatus membrane. Its function is as follows. Mediates the transport of adenosine 3'-phospho 5'-phosphosulfate (PAPS), from cytosol into Golgi. PAPS is a universal sulfuryl donor for sulfation events that take place in the Golgi. The sequence is that of Adenosine 3'-phospho 5'-phosphosulfate transporter 2 (pst-2) from Caenorhabditis elegans.